Here is a 332-residue protein sequence, read N- to C-terminus: HPr kinase/phosphorylase (332 aa).

Residues histidine 153 and lysine 174 contribute to the active site. ATP is bound at residue 168-175; sequence GKSGLGKS. Serine 175 provides a ligand contact to Mg(2+). Aspartate 192 acts as the Proton acceptor; for phosphorylation activity. Proton donor; for dephosphorylation activity in catalysis. An important for the catalytic mechanism of both phosphorylation and dephosphorylation region spans residues 217–226; it reads MEIRGLGVVD. Position 218 (glutamate 218) interacts with Mg(2+). The active site involves arginine 259. Residues 280 to 285 form an important for the catalytic mechanism of dephosphorylation region; that stretch reads PIFPGK.

The protein belongs to the HPrK/P family. Homohexamer. Mg(2+) serves as cofactor.

It catalyses the reaction [HPr protein]-L-serine + ATP = [HPr protein]-O-phospho-L-serine + ADP + H(+). The enzyme catalyses [HPr protein]-O-phospho-L-serine + phosphate + H(+) = [HPr protein]-L-serine + diphosphate. Its function is as follows. Catalyzes the ATP- as well as the pyrophosphate-dependent phosphorylation of a specific serine residue in HPr, a phosphocarrier protein of the phosphoenolpyruvate-dependent sugar phosphotransferase system (PTS). HprK/P also catalyzes the pyrophosphate-producing, inorganic phosphate-dependent dephosphorylation (phosphorolysis) of seryl-phosphorylated HPr (P-Ser-HPr). The polypeptide is HPr kinase/phosphorylase (Chlorobium luteolum (strain DSM 273 / BCRC 81028 / 2530) (Pelodictyon luteolum)).